The primary structure comprises 1212 residues: DNA topoisomerase 1 (1212 aa).

Positions 1–114 constitute a Toprim domain; it reads MKLVVVESPA…DVERVTFNAI (114 aa). Mg(2+)-binding residues include glutamate 7 and aspartate 80. The 427-residue stretch at 130 to 556 folds into the Topo IA-type catalytic domain; sequence DNDLINAYLA…AFWHDFKPKT (427 aa). The interval 164–169 is interaction with DNA; it reads SAGRVQ. The active-site O-(5'-phospho-DNA)-tyrosine intermediate is tyrosine 293. The C4-type zinc-finger motif lies at 592-619; sequence CPSCHTGRLALKGGRFGAFIACSNYPEC. 3 disordered regions span residues 687 to 742, 758 to 937, and 1107 to 1212; these read GKGN…GVST, ALAG…KARA, and RAKM…EVAE. Composition is skewed to polar residues over residues 708-742 and 770-782; these read ASST…GVST and VSDN…SSTI. A compositionally biased stretch (basic and acidic residues) spans 815–840; sequence ADNRLLSHRNGDIDSRAIPADHKDSS. 2 stretches are compositionally biased toward polar residues: residues 881–890 and 897–906; these read AITSDNSPSD and STPSSATSSV. The segment covering 921 to 934 has biased composition (basic and acidic residues); the sequence is KADEQAKEEEESRK. Positions 1109 to 1140 are enriched in basic residues; it reads KMPKKKKTKKAAAKKPAAKKTTTKKAAPKKAT. A compositionally biased stretch (low complexity) spans 1141-1151; it reads TKTATPKSATT. The segment covering 1167–1182 has biased composition (basic residues); sequence PAKKAVAKKTTAKKPA. Low complexity predominate over residues 1183-1199; it reads SKSATKKAPSSKTTAAK.

The protein belongs to the type IA topoisomerase family. Monomer. It depends on Mg(2+) as a cofactor.

It catalyses the reaction ATP-independent breakage of single-stranded DNA, followed by passage and rejoining.. Its function is as follows. Releases the supercoiling and torsional tension of DNA, which is introduced during the DNA replication and transcription, by transiently cleaving and rejoining one strand of the DNA duplex. Introduces a single-strand break via transesterification at a target site in duplex DNA. The scissile phosphodiester is attacked by the catalytic tyrosine of the enzyme, resulting in the formation of a DNA-(5'-phosphotyrosyl)-enzyme intermediate and the expulsion of a 3'-OH DNA strand. The free DNA strand then undergoes passage around the unbroken strand, thus removing DNA supercoils. Finally, in the religation step, the DNA 3'-OH attacks the covalent intermediate to expel the active-site tyrosine and restore the DNA phosphodiester backbone. This Zymomonas mobilis subsp. mobilis (strain ATCC 31821 / ZM4 / CP4) protein is DNA topoisomerase 1.